The chain runs to 630 residues: Probable potassium transport system protein Kup (630 aa).

Helical transmembrane passes span 17–37 (LAIA…LYSL), 51–71 (PSAI…VVGI), 105–125 (ITGL…GDAV), 144–164 (PQLS…LFWI), 175–195 (LFGP…IYHI), 218–238 (VLLA…AEAL), 255–275 (YVLV…LLLL), 283–303 (PFFL…STVA), 344–364 (IYVP…VIGF), 374–394 (YGIA…VVMV), 402–422 (LLVA…FGAN), and 428–448 (QGGW…MTWY).

Belongs to the HAK/KUP transporter (TC 2.A.72) family.

Its subcellular location is the cell inner membrane. The enzyme catalyses K(+)(in) + H(+)(in) = K(+)(out) + H(+)(out). In terms of biological role, transport of potassium into the cell. Likely operates as a K(+):H(+) symporter. This Burkholderia mallei (strain NCTC 10247) protein is Probable potassium transport system protein Kup.